The chain runs to 668 residues: Lebercilin-like protein (668 aa).

Positions 17–44 (SVALENNRRSAECKRSPGTGDFSRNSSA) are disordered. The span at 22–31 (NNRRSAECKR) shows a compositional bias: basic and acidic residues. 2 coiled-coil regions span residues 148 to 259 (LHKI…EREE) and 305 to 336 (AAQT…IKNI). Positions 351–402 (YPKVSSTKSVQADRKSLPFTSMRHQGTQKSDVPPLTTKGKKATGNMNHKEKS) are disordered. Over residues 368-380 (PFTSMRHQGTQKS) the composition is skewed to polar residues. Residues 420-440 (EDSKTKYEDLSREEKHLEVQV) adopt a coiled-coil conformation. Disordered regions lie at residues 495–520 (RSMQ…PLRQ), 533–581 (LHHG…FGKS), and 605–668 (SGYV…KIII). The span at 546–558 (AGNTKYSHSTSKH) shows a compositional bias: polar residues. Basic and acidic residues-rich tracts occupy residues 560–572 (SNRE…HSDS) and 621–632 (GSEEPLQSKESH). The span at 633–660 (PPSQASASNAFGDSKVTVVNSIKPSSPT) shows a compositional bias: polar residues.

This sequence belongs to the LCA5 family.

In Macaca fascicularis (Crab-eating macaque), this protein is Lebercilin-like protein.